The sequence spans 260 residues: Histidine-binding periplasmic protein (260 aa).

Residues 1–22 form the signal peptide; the sequence is MKKLVLSLSLVLAFSSATAAFA. The cysteines at positions 60 and 67 are disulfide-linked. 6 residues coordinate L-histidine: S91, S92, S94, R99, T143, and D183.

The protein belongs to the bacterial solute-binding protein 3 family. As to quaternary structure, the complex is composed of two ATP-binding proteins (HisP), two transmembrane proteins (HisM and HisQ) and a solute-binding protein (HisJ).

The protein resides in the periplasm. In terms of biological role, part of the ABC transporter complex HisPMQJ involved in histidine transport. Binds histidine. Interacts with HisQMP and stimulates ATPase activity of HisP, which results in histidine translocation. This Escherichia coli O157:H7 protein is Histidine-binding periplasmic protein (hisJ).